The sequence spans 220 residues: Imidazoleglycerol-phosphate dehydratase (220 aa).

It belongs to the imidazoleglycerol-phosphate dehydratase family.

It carries out the reaction D-erythro-1-(imidazol-4-yl)glycerol 3-phosphate = 3-(imidazol-4-yl)-2-oxopropyl phosphate + H2O. It functions in the pathway amino-acid biosynthesis; L-histidine biosynthesis; L-histidine from 5-phospho-alpha-D-ribose 1-diphosphate: step 6/9. This Eremothecium gossypii (strain ATCC 10895 / CBS 109.51 / FGSC 9923 / NRRL Y-1056) (Yeast) protein is Imidazoleglycerol-phosphate dehydratase (HIS3).